Consider the following 509-residue polypeptide: ATP synthase subunit alpha (509 aa).

169–176 (GDRQTGKT) contributes to the ATP binding site.

The protein belongs to the ATPase alpha/beta chains family. As to quaternary structure, F-type ATPases have 2 components, CF(1) - the catalytic core - and CF(0) - the membrane proton channel. CF(1) has five subunits: alpha(3), beta(3), gamma(1), delta(1), epsilon(1). CF(0) has three main subunits: a(1), b(2) and c(9-12). The alpha and beta chains form an alternating ring which encloses part of the gamma chain. CF(1) is attached to CF(0) by a central stalk formed by the gamma and epsilon chains, while a peripheral stalk is formed by the delta and b chains.

It localises to the cell inner membrane. The enzyme catalyses ATP + H2O + 4 H(+)(in) = ADP + phosphate + 5 H(+)(out). Its function is as follows. Produces ATP from ADP in the presence of a proton gradient across the membrane. The alpha chain is a regulatory subunit. The protein is ATP synthase subunit alpha of Brucella abortus (strain S19).